Reading from the N-terminus, the 955-residue chain is Leucine--tRNA ligase (955 aa).

The short motif at 51-61 (PYLNGVLHAGH) is the 'HIGH' region element. The short motif at 647–651 (KLSKS) is the 'KMSKS' region element. K650 lines the ATP pocket.

This sequence belongs to the class-I aminoacyl-tRNA synthetase family.

The protein localises to the cytoplasm. The catalysed reaction is tRNA(Leu) + L-leucine + ATP = L-leucyl-tRNA(Leu) + AMP + diphosphate. The chain is Leucine--tRNA ligase from Methanococcus maripaludis (strain C5 / ATCC BAA-1333).